Consider the following 1102-residue polypeptide: MRTSLQAVALWGQKAPPHSITAIMITDDQRTIVTGSQEGQLCLWNLSHELKISAKELLFGHSASVTCLARARDFSKQPYIVSAAENGEMCVWNVTNGQCMEKATLPYRHTAICYYHCSFRMTGEGWLLCCGEYQDVLIIDAKTLAVVHSFRSSQFPDWINCMCIVHSMRIQEDSLLVVSVAGELKVWDLSSSINSIQEKQDVYEKESKFLESLNCQTIRFCTYTERLLLVVFSKCWKVYDYCDFSLLLTEVSRNGQFFAGGEVIAAHRILIWTEDGHSYIYQLLNSGLSKSIYPADGRVLKETIYPHLLCSTSVQENKEQSRPFVMGYMNERKEPFYKVLFSGEVSGRITLWHIPDVPVSKFDGSPREIPVTATWTLQDNFDKHDTMSQSIIDYFSGLKDGAGTAVVTSSEYIPSLDKLICGCEDGTIIITQALNAAKARLLEGGSLVKDSPPHKVLKGHHQSVTSLLYPHGLSSKLDQSWMLSGDLDSCVILWDIFTEEILHKFFLEAGPVTSLLMSPEKFKLRGEQIICCVCGDHSVALLHLEGKSCLLHARKHLFPVRMIKWHPVENFLIVGCADDSVYIWEIETGTLERHETGERARIILNCCDDSQLVKSVLPIASETLKHKSIEQRSSSPYQLGPLPCPGLQVESSCKVTDAKFCPRPFNVLPVKTKWSNVGFHILLFDLENLVELLLPTPLSDVDSSSSFYGGEVLRRAKSTVEKKTLTLRKSKTACGPLSAEALAKPITESLAQGDNTIKFSEENDGIKRQKKMKISKKMQPKPSRKVDASLTIDTAKLFLSCLLPWGVDKDLDYLCIKHLNILKLQGPISLGISLNEDNFSLMLPGWDLCNSGMIKDYSGVNLFSRKVLDLSDKYTATLPNQVGIPRGLENNCDSLRESDTIVYLLSRLFLVNKLVNMPLELACRVGSSFRMESIHNKMRGAGNDILNMSSFYSCLRNGKNESHVPEADLSLLKLISCWRDQSVQVTEAIQAVLLAEVQQHMKSLGKIPVNSQPVSMAENGNCEMKQMLPKLEWTEELELQCVRNTLPLQTPVSPVKHDSNSNSANFQDVEDMPDRCALEESESPGEPRHHSWIAKVCPCKVS.

WD repeat units lie at residues 15-54 (APPH…KISA), 60-102 (GHSA…CMEK), 160-197 (NCMC…NSIQ), 318-362 (KEQS…VSKF), 402-441 (AGTA…KARL), 459-504 (GHHQ…ILHK), 507-552 (LEAG…CLLH), and 555-594 (KHLF…LERH). Residues serine 1081 and serine 1083 each carry the phosphoserine modification.

Its subcellular location is the cytoplasmic vesicle. In terms of biological role, plays a major role in formation of tooth enamel. Specifically required during the maturation phase of amelogenesis for normal formation of the enamel matrix and clearance of enamel proteins. May be involved in localization of the calcium transporter SLC24A4 to the ameloblast cell membrane. This is WD repeat-containing protein 72 (WDR72) from Homo sapiens (Human).